We begin with the raw amino-acid sequence, 1628 residues long: THO complex subunit 2 (1628 aa).

Composition is skewed to basic and acidic residues over residues 1–10 (MTSLPEKDQQ) and 1360–1399 (TDNK…EGNR). 2 disordered regions span residues 1-21 (MTSL…NQKK) and 1337-1628 (VALN…RKIQ). Phosphothreonine is present on residues Thr1406 and Thr1408. Basic and acidic residues predominate over residues 1411–1429 (DIQRSDSKLREDQSRDRTP). The segment covering 1430-1444 (QSRSFTNENNDNLRS) has biased composition (polar residues). The segment covering 1461–1474 (ARREHESQKSDRWR) has biased composition (basic and acidic residues). The segment covering 1476–1493 (NGNVNRNPRVSNNNSTNV) has biased composition (low complexity). Basic and acidic residues predominate over residues 1494–1526 (SRERSSEANHRTSNDNKRDEVTEGKDKNKRQDI). The segment covering 1527–1550 (SGESNSRQNNAISRAGRSNGSNRG) has biased composition (polar residues). Over residues 1551-1560 (NDSRDADGRR) the composition is skewed to basic and acidic residues. The residue at position 1577 (Ser1577) is a Phosphoserine. Basic and acidic residues predominate over residues 1581 to 1628 (LREEDERENSRRRARQDDRRDRDSRQQRDRPRDRTSRSAREEKRRKIQ).

Belongs to the THOC2 family. Component of the THO complex. THO associates with DNA and RNA in vitro.

The protein localises to the nucleus. Component the THO subcomplex of the TREX complex, which operates in coupling transcription elongation to mRNA export. The THO complex is recruited to transcribed genes and moves along the gene with the elongating polymerase during transcription. THO is important for stabilizing nascent RNA in the RNA polymerase II elongation complex by preventing formation of DNA:RNA hybrids behind the elongating polymerase. This chain is THO complex subunit 2 (tho2), found in Schizosaccharomyces pombe (strain 972 / ATCC 24843) (Fission yeast).